Reading from the N-terminus, the 424-residue chain is E3 ubiquitin-protein ligase RNF26 (424 aa).

5 consecutive transmembrane segments (helical) span residues 24–44 (LNFL…AFIY), 60–80 (GFLL…FGGL), 157–177 (ISTQ…TGPL), 183–203 (VVAA…ILLW), and 224–244 (VVFH…ILIV). The RING-type zinc finger occupies 371–413 (CVICQDQSKTVLLLPCRHLCLCQACTEILMRHPVYHRNCPLCR).

As to quaternary structure, interacts with INCA1. Interacts with TMEM43, ENDOD1, TMEM33 and TMED1 to form a complex capable of modulating innate immune signaling through the cGAS-STING pathway. Interacts with UBE2J1; this interaction is important for SQSTM1 ubiquitination.

The protein localises to the endoplasmic reticulum membrane. The catalysed reaction is S-ubiquitinyl-[E2 ubiquitin-conjugating enzyme]-L-cysteine + [acceptor protein]-L-lysine = [E2 ubiquitin-conjugating enzyme]-L-cysteine + N(6)-ubiquitinyl-[acceptor protein]-L-lysine.. The protein operates within protein modification; protein ubiquitination. E3 ubiquitin-protein ligase that plays a key role in endosome organization by retaining vesicles in the perinuclear cloud. Acts as a platform for perinuclear positioning of the endosomal system by mediating ubiquitination of SQSTM1 through interaction with the ubiquitin conjugating enzyme UBE2J1. Ubiquitinated SQSTM1 attracts specific vesicle-associated adapters, forming a molecular bridge that restrains cognate vesicles in the perinuclear region and organizes the endosomal pathway for efficient cargo transport. Also acts as a regulator of type I interferon production in response to viral infection by mediating the formation of 'Lys-11'-linked polyubiquitin chains on TMEM173/STING, leading to stabilize TMEM173/STING. Also required to limit type I interferon response by promoting autophagic degradation of IRF3. The protein is E3 ubiquitin-protein ligase RNF26 of Mus musculus (Mouse).